The sequence spans 267 residues: 4-hydroxy-tetrahydrodipicolinate reductase (267 aa).

NAD(+) contacts are provided by residues 8–13 (GAAGRM) and glutamate 34. Arginine 35 is an NADP(+) binding site. NAD(+) is bound by residues 98 to 100 (GST) and 122 to 125 (APNM). Histidine 155 functions as the Proton donor/acceptor in the catalytic mechanism. Histidine 156 lines the (S)-2,3,4,5-tetrahydrodipicolinate pocket. Lysine 159 (proton donor) is an active-site residue. 165-166 (GT) lines the (S)-2,3,4,5-tetrahydrodipicolinate pocket.

The protein belongs to the DapB family.

The protein localises to the cytoplasm. The catalysed reaction is (S)-2,3,4,5-tetrahydrodipicolinate + NAD(+) + H2O = (2S,4S)-4-hydroxy-2,3,4,5-tetrahydrodipicolinate + NADH + H(+). It carries out the reaction (S)-2,3,4,5-tetrahydrodipicolinate + NADP(+) + H2O = (2S,4S)-4-hydroxy-2,3,4,5-tetrahydrodipicolinate + NADPH + H(+). It participates in amino-acid biosynthesis; L-lysine biosynthesis via DAP pathway; (S)-tetrahydrodipicolinate from L-aspartate: step 4/4. Functionally, catalyzes the conversion of 4-hydroxy-tetrahydrodipicolinate (HTPA) to tetrahydrodipicolinate. The sequence is that of 4-hydroxy-tetrahydrodipicolinate reductase from Pelobacter propionicus (strain DSM 2379 / NBRC 103807 / OttBd1).